The chain runs to 557 residues: UvrABC system protein C (557 aa).

The region spanning Glu14–Val89 is the GIY-YIG domain. One can recognise a UVR domain in the interval Glu194–Val229.

This sequence belongs to the UvrC family. Interacts with UvrB in an incision complex.

Its subcellular location is the cytoplasm. Its function is as follows. The UvrABC repair system catalyzes the recognition and processing of DNA lesions. UvrC both incises the 5' and 3' sides of the lesion. The N-terminal half is responsible for the 3' incision and the C-terminal half is responsible for the 5' incision. This Thermotoga petrophila (strain ATCC BAA-488 / DSM 13995 / JCM 10881 / RKU-1) protein is UvrABC system protein C.